The sequence spans 319 residues: Alpha-hemolysin (319 aa).

Positions 1 to 26 are cleaved as a signal peptide; it reads MKTRIVSSVTTTLLLGSILMNPVANA.

Belongs to the aerolysin family. In terms of assembly, self-assembles to form first a non-lytic oligomeric intermediate and then, a mushroom-shaped homoheptamer structure of 100 Angstroms in length and up to 100 Angstroms in diameter.

The protein resides in the secreted. In terms of biological role, alpha-toxin binds to the membrane of eukaryotic cells resulting in the release of low-molecular weight molecules and leading to an eventual osmotic lysis. Inhibits host neutrophil chemotaxis to the lesion region. Heptamer oligomerization and pore formation is required for lytic activity. In Staphylococcus aureus (strain NCTC 8325 / PS 47), this protein is Alpha-hemolysin (hly).